The sequence spans 324 residues: Non-homologous end joining protein Ku 1 (324 aa).

The 184-residue stretch at 10 to 193 folds into the Ku domain; it reads INFGLVTIPV…AKPSDKEIQM (184 aa). The tract at residues 256–324 is disordered; the sequence is QARRGRGGQV…SGGRRRRRAS (69 aa). Basic and acidic residues predominate over residues 281–292; that stretch reads AELDKKAKELGI.

The protein belongs to the prokaryotic Ku family. In terms of assembly, homodimer. Interacts with LigD.

Its function is as follows. With LigD forms a non-homologous end joining (NHEJ) DNA repair enzyme, which repairs dsDNA breaks with reduced fidelity. Binds linear dsDNA with 5'- and 3'- overhangs but not closed circular dsDNA nor ssDNA. Recruits and stimulates the ligase activity of LigD. The sequence is that of Non-homologous end joining protein Ku 1 from Saccharopolyspora erythraea (strain ATCC 11635 / DSM 40517 / JCM 4748 / NBRC 13426 / NCIMB 8594 / NRRL 2338).